The primary structure comprises 351 residues: DNA polymerase IV (351 aa).

The region spanning 4 to 185 is the UmuC domain; sequence IIHVDMDCFF…LPLAKIPGVG (182 aa). Aspartate 8 and aspartate 103 together coordinate Mg(2+). Glutamate 104 is an active-site residue.

This sequence belongs to the DNA polymerase type-Y family. Monomer. The cofactor is Mg(2+).

The protein resides in the cytoplasm. The enzyme catalyses DNA(n) + a 2'-deoxyribonucleoside 5'-triphosphate = DNA(n+1) + diphosphate. In terms of biological role, poorly processive, error-prone DNA polymerase involved in untargeted mutagenesis. Copies undamaged DNA at stalled replication forks, which arise in vivo from mismatched or misaligned primer ends. These misaligned primers can be extended by PolIV. Exhibits no 3'-5' exonuclease (proofreading) activity. May be involved in translesional synthesis, in conjunction with the beta clamp from PolIII. This Salmonella choleraesuis (strain SC-B67) protein is DNA polymerase IV.